Reading from the N-terminus, the 140-residue chain is Alpha-lactalbumin (140 aa).

The N-terminal stretch at 1–19 (MMSLLPLLLIGIVLPATQA) is a signal peptide. The region spanning 20 to 140 (KDYGKCELNQ…CRENLDQWNC (121 aa)) is the C-type lysozyme domain. 4 cysteine pairs are disulfide-bonded: C25–C140, C47–C131, C80–C96, and C92–C110. The Ca(2+) site is built by K98, D101, D103, D106, and D107.

In terms of assembly, lactose synthase (LS) is a heterodimer of a catalytic component, beta1,4-galactosyltransferase (beta4Gal-T1) and a regulatory component, alpha-lactalbumin (LA). Mammary gland specific. Secreted in milk.

The protein resides in the secreted. In terms of biological role, regulatory subunit of lactose synthase, changes the substrate specificity of galactosyltransferase in the mammary gland making glucose a good acceptor substrate for this enzyme. This enables LS to synthesize lactose, the major carbohydrate component of milk. In other tissues, galactosyltransferase transfers galactose onto the N-acetylglucosamine of the oligosaccharide chains in glycoproteins. The chain is Alpha-lactalbumin (LALBA) from Trichosurus vulpecula (Brush-tailed possum).